The following is a 227-amino-acid chain: Esterase Rv3036c (227 aa).

Residues 3–23 (YLIATAVLVAVVLVGWPAAGA) form a helical membrane-spanning segment.

Belongs to the RsiV family.

The protein resides in the cell membrane. The protein localises to the secreted. Its subcellular location is the cell wall. The enzyme catalyses a fatty acid ester + H2O = an aliphatic alcohol + a fatty acid + H(+). It carries out the reaction an acetyl ester + H2O = an aliphatic alcohol + acetate + H(+). It catalyses the reaction a butanoate ester + H2O = an aliphatic alcohol + butanoate + H(+). The catalysed reaction is a hexanoate ester + H2O = an aliphatic alcohol + hexanoate + H(+). The enzyme catalyses a dodecanoate ester + H2O = an aliphatic alcohol + dodecanoate + H(+). It carries out the reaction a tetradecanoate ester + H2O = an aliphatic alcohol + tetradecanoate + H(+). It catalyses the reaction an octanoate ester + H2O = an aliphatic alcohol + octanoate + H(+). Hydrolyzes ester substrates carbon chain lengths ranging from C2 to C14. In vitro, acetate (C2), butyrate (C4) and caprylate (C6) are hydrolyzed with high efficiency. Has lower activity against laurate (C12), myristate (C14) and caproate (C8), and weak activity against palmitate (C16). The protein is Esterase Rv3036c of Mycobacterium tuberculosis (strain ATCC 25618 / H37Rv).